The primary structure comprises 59 residues: Small ribosomal subunit protein bS21 (59 aa).

The disordered stretch occupies residues glutamate 39–arginine 59. Basic residues predominate over residues tyrosine 45–arginine 59.

It belongs to the bacterial ribosomal protein bS21 family.

This Prochlorococcus marinus (strain SARG / CCMP1375 / SS120) protein is Small ribosomal subunit protein bS21.